The following is a 701-amino-acid chain: F-box/LRR-repeat protein 17 (701 aa).

Positions 1–11 (MGHLLSKEPRN) are enriched in basic and acidic residues. Disordered stretches follow at residues 1-20 (MGHLLSKEPRNRPSQKRPRC), 72-94 (APAGPEEEPPLSPPPRDGAYAAA), and 227-300 (GGGG…DADC). Over residues 227–237 (GGGGGPAGGGA) the composition is skewed to gly residues. A compositionally biased stretch (pro residues) spans 252–264 (EQPPQPLCPPPSS). Residues 318–365 (TPDINQLPPSILLKIFSNLSLDERCLSASLVCKYWRDLCLDFQFWKQL) enclose the F-box domain.

This sequence belongs to the FBXL17 family. Part of the SCF (SKP1-CUL1-F-box) E3 ubiquitin-protein ligase complex SCF(FBXL17) composed of CUL1, SKP1, RBX1 and FBXL17. Interacts with BTB domain-containing proteins such as KLHL12, BCL6 and BACH1; specifically recognizes and binds a conserved degron of non-consecutive residues present at the interface of BTB dimers of aberrant composition. Interacts with SUFU. Interacts with PRMT1.

Its subcellular location is the cytoplasm. It localises to the nucleus. Functionally, substrate-recognition component of the SCF(FBXL17) E3 ubiquitin ligase complex, a key component of a quality control pathway required to ensure functional dimerization of BTB domain-containing proteins (dimerization quality control, DQC). FBXL17 specifically recognizes and binds a conserved degron of non-consecutive residues present at the interface of BTB dimers of aberrant composition: aberrant BTB dimer are then ubiquitinated by the SCF(FBXL17) complex and degraded by the proteasome. The ability of the SCF(FBXL17) complex to eliminate compromised BTB dimers is required for the differentiation and survival of neural crest and neuronal cells. The SCF(FBXL17) complex mediates ubiquitination and degradation of BACH1. The SCF(FBXL17) complex is also involved in the regulation of the hedgehog/smoothened (Hh) signaling pathway by mediating the ubiquitination and degradation of SUFU, allowing the release of GLI1 from SUFU for proper Hh signal transduction. The SCF(FBXL17) complex mediates ubiquitination and degradation of PRMT1. In Homo sapiens (Human), this protein is F-box/LRR-repeat protein 17.